Consider the following 483-residue polypeptide: NADH-quinone oxidoreductase subunit N (483 aa).

A run of 14 helical transmembrane segments spans residues 8–28 (INLA…GLLL), 45–65 (IAAG…GATQ), 78–98 (FAAF…VVSW), 106–126 (LGNG…MFMI), 131–151 (FLVL…LAAY), 166–186 (FVLG…IYGV), 206–226 (MLGI…KIAA), 241–261 (PTSV…AALF), 275–295 (WGPI…LAGL), 303–323 (LLAY…AVGN), 330–350 (VLVY…LILV), 373–393 (LALL…LAGF), 399–419 (IFMA…VLFS), and 452–472 (AIVG…GSLM).

This sequence belongs to the complex I subunit 2 family. As to quaternary structure, NDH-1 is composed of 14 different subunits. Subunits NuoA, H, J, K, L, M, N constitute the membrane sector of the complex.

It is found in the cell inner membrane. It catalyses the reaction a quinone + NADH + 5 H(+)(in) = a quinol + NAD(+) + 4 H(+)(out). In terms of biological role, NDH-1 shuttles electrons from NADH, via FMN and iron-sulfur (Fe-S) centers, to quinones in the respiratory chain. The immediate electron acceptor for the enzyme in this species is believed to be ubiquinone. Couples the redox reaction to proton translocation (for every two electrons transferred, four hydrogen ions are translocated across the cytoplasmic membrane), and thus conserves the redox energy in a proton gradient. This is NADH-quinone oxidoreductase subunit N from Magnetococcus marinus (strain ATCC BAA-1437 / JCM 17883 / MC-1).